Reading from the N-terminus, the 404-residue chain is Cysteine desulfurase IscS (404 aa).

Pyridoxal 5'-phosphate-binding positions include 73-74, Asn-153, Gln-181, and 201-203; these read AT and SAH. Position 204 is an N6-(pyridoxal phosphate)lysine (Lys-204). Thr-241 lines the pyridoxal 5'-phosphate pocket. Residue Cys-327 is the Cysteine persulfide intermediate of the active site. Cys-327 lines the [2Fe-2S] cluster pocket.

This sequence belongs to the class-V pyridoxal-phosphate-dependent aminotransferase family. NifS/IscS subfamily. As to quaternary structure, homodimer. Forms a heterotetramer with IscU, interacts with other sulfur acceptors. It depends on pyridoxal 5'-phosphate as a cofactor.

The protein localises to the cytoplasm. The enzyme catalyses (sulfur carrier)-H + L-cysteine = (sulfur carrier)-SH + L-alanine. Its pathway is cofactor biosynthesis; iron-sulfur cluster biosynthesis. In terms of biological role, master enzyme that delivers sulfur to a number of partners involved in Fe-S cluster assembly, tRNA modification or cofactor biosynthesis. Catalyzes the removal of elemental sulfur atoms from cysteine to produce alanine. Functions as a sulfur delivery protein for Fe-S cluster synthesis onto IscU, an Fe-S scaffold assembly protein, as well as other S acceptor proteins. This Anaeromyxobacter dehalogenans (strain 2CP-C) protein is Cysteine desulfurase IscS.